Consider the following 269-residue polypeptide: Ribonuclease HII (269 aa).

The 187-residue stretch at Tyr-83 to Leu-269 folds into the RNase H type-2 domain. A divalent metal cation-binding residues include Asp-89, Glu-90, and Asp-185.

This sequence belongs to the RNase HII family. Mn(2+) serves as cofactor. Requires Mg(2+) as cofactor.

It is found in the cytoplasm. The enzyme catalyses Endonucleolytic cleavage to 5'-phosphomonoester.. Functionally, endonuclease that specifically degrades the RNA of RNA-DNA hybrids. The polypeptide is Ribonuclease HII (Clostridium botulinum (strain ATCC 19397 / Type A)).